Here is a 304-residue protein sequence, read N- to C-terminus: CRISPR-associated endonuclease Cas1 (304 aa).

Positions 148, 204, and 219 each coordinate Mn(2+).

It belongs to the CRISPR-associated endonuclease Cas1 family. Homodimer, forms a heterotetramer with a Cas2 homodimer. The cofactor is Mg(2+). It depends on Mn(2+) as a cofactor.

Its function is as follows. CRISPR (clustered regularly interspaced short palindromic repeat), is an adaptive immune system that provides protection against mobile genetic elements (viruses, transposable elements and conjugative plasmids). CRISPR clusters contain spacers, sequences complementary to antecedent mobile elements, and target invading nucleic acids. CRISPR clusters are transcribed and processed into CRISPR RNA (crRNA). Acts as a dsDNA endonuclease. Involved in the integration of spacer DNA into the CRISPR cassette. The sequence is that of CRISPR-associated endonuclease Cas1 from Neisseria meningitidis serogroup C (strain 8013).